We begin with the raw amino-acid sequence, 479 residues long: UDP-N-acetylmuramoyl-L-alanyl-D-glutamate--2,6-diaminopimelate ligase (479 aa).

Position 21 (S21) interacts with UDP-N-acetyl-alpha-D-muramoyl-L-alanyl-D-glutamate. Residue 98–104 (GTNGKSS) participates in ATP binding. Residues 144–145 (TT), S171, Q177, and R179 contribute to the UDP-N-acetyl-alpha-D-muramoyl-L-alanyl-D-glutamate site. Position 211 is an N6-carboxylysine (K211). Meso-2,6-diaminopimelate-binding positions include R372, 396–399 (DNPR), G446, and E450. A Meso-diaminopimelate recognition motif motif is present at residues 396–399 (DNPR).

It belongs to the MurCDEF family. MurE subfamily. Mg(2+) serves as cofactor. Carboxylation is probably crucial for Mg(2+) binding and, consequently, for the gamma-phosphate positioning of ATP.

It is found in the cytoplasm. The enzyme catalyses UDP-N-acetyl-alpha-D-muramoyl-L-alanyl-D-glutamate + meso-2,6-diaminopimelate + ATP = UDP-N-acetyl-alpha-D-muramoyl-L-alanyl-gamma-D-glutamyl-meso-2,6-diaminopimelate + ADP + phosphate + H(+). The protein operates within cell wall biogenesis; peptidoglycan biosynthesis. Functionally, catalyzes the addition of meso-diaminopimelic acid to the nucleotide precursor UDP-N-acetylmuramoyl-L-alanyl-D-glutamate (UMAG) in the biosynthesis of bacterial cell-wall peptidoglycan. This chain is UDP-N-acetylmuramoyl-L-alanyl-D-glutamate--2,6-diaminopimelate ligase, found in Rickettsia conorii (strain ATCC VR-613 / Malish 7).